The chain runs to 338 residues: Inositol 2-dehydrogenase 4 (338 aa).

This sequence belongs to the Gfo/Idh/MocA family. In terms of assembly, homotetramer.

It catalyses the reaction myo-inositol + NAD(+) = scyllo-inosose + NADH + H(+). In terms of biological role, involved in the oxidation of myo-inositol (MI) to 2-keto-myo-inositol (2KMI or 2-inosose). In Saccharopolyspora erythraea (strain ATCC 11635 / DSM 40517 / JCM 4748 / NBRC 13426 / NCIMB 8594 / NRRL 2338), this protein is Inositol 2-dehydrogenase 4.